The following is a 226-amino-acid chain: 2-C-methyl-D-erythritol 4-phosphate cytidylyltransferase (226 aa).

It belongs to the IspD/TarI cytidylyltransferase family. IspD subfamily.

The enzyme catalyses 2-C-methyl-D-erythritol 4-phosphate + CTP + H(+) = 4-CDP-2-C-methyl-D-erythritol + diphosphate. The protein operates within isoprenoid biosynthesis; isopentenyl diphosphate biosynthesis via DXP pathway; isopentenyl diphosphate from 1-deoxy-D-xylulose 5-phosphate: step 2/6. In terms of biological role, catalyzes the formation of 4-diphosphocytidyl-2-C-methyl-D-erythritol from CTP and 2-C-methyl-D-erythritol 4-phosphate (MEP). The chain is 2-C-methyl-D-erythritol 4-phosphate cytidylyltransferase from Prochlorococcus marinus (strain SARG / CCMP1375 / SS120).